The primary structure comprises 150 residues: Glycine cleavage system H-like protein gcvH2 (150 aa).

The region spanning 44–126 is the Lipoyl-binding domain; sequence VATVGLSSFG…PANNWMVKFK (83 aa).

Belongs to the GcvH family.

This chain is Glycine cleavage system H-like protein gcvH2 (gcvH2), found in Dictyostelium discoideum (Social amoeba).